The following is a 66-amino-acid chain: Small ribosomal subunit protein eS27 (66 aa).

4 residues coordinate Zn(2+): Cys21, Cys24, Cys40, and Cys43. The C4-type zinc finger occupies 21-43 (CRQCNNEQVIFSNATFPVRCLSC).

The protein belongs to the eukaryotic ribosomal protein eS27 family. As to quaternary structure, part of the 30S ribosomal subunit. It depends on Zn(2+) as a cofactor.

This Sulfolobus acidocaldarius (strain ATCC 33909 / DSM 639 / JCM 8929 / NBRC 15157 / NCIMB 11770) protein is Small ribosomal subunit protein eS27.